Consider the following 925-residue polypeptide: Ubp5-interacting protein ftp105 (925 aa).

A compositionally biased stretch (low complexity) spans 650–664 (EGSSDFESKSSDNTS). Residues 650–671 (EGSSDFESKSSDNTSLDGTPLQ) form a disordered region.

This sequence belongs to the hid-1 family. Interacts with ubp5.

It is found in the cytoplasm. Its subcellular location is the golgi apparatus. In terms of biological role, required for the localization of ubp5 to the Golgi apparatus. Involved in detoxification of cadmium ion. In Schizosaccharomyces pombe (strain 972 / ATCC 24843) (Fission yeast), this protein is Ubp5-interacting protein ftp105 (ftp105).